A 200-amino-acid polypeptide reads, in one-letter code: Ras-related protein RABF2b (200 aa).

Residue 17–25 (GDVGAGKSS) coordinates GTP. The Effector region signature appears at 39-47 (QESTIGAAF). GTP is bound by residues 65–69 (DTAGQ), 123–126 (NKSD), and 153–154 (SA). S-geranylgeranyl cysteine attachment occurs at residues C198 and C199.

Belongs to the small GTPase superfamily. Rab family. As to quaternary structure, interacts with VPS9A homodimer. Interacts with TCTP1. Interacts with MON1. Interacts with EREX (via PX domain). Binds to VPS3. As to expression, expressed in roots and actively dividing cells.

It is found in the early endosome membrane. Its subcellular location is the endosome membrane. It localises to the prevacuolar compartment membrane. The protein resides in the endosome. The protein localises to the multivesicular body membrane. It is found in the cell membrane. Its subcellular location is the cytoplasm. Its activity is regulated as follows. Regulated by guanine nucleotide exchange factors (GEFs) which promote the exchange of bound GDP for free GTP. Endosomal protein that may be involved in endocytosis. Involved in the trafficking of proteins from prevacuolar compartments (PVCs) to vacuoles. May activate the MON1-CCZ1 complex which acts as guanine nucleotide exchange factors (GEF) for Rab7 protein family, and serves as a link between Rab5 and Rab7 families in PVCs, and mediates PVC maturation. Involved in vacuolar transport of storage proteins with EREX as effector. Regulates membrane trafficking to protein storage vacuoles (PSVs). The protein is Ras-related protein RABF2b of Arabidopsis thaliana (Mouse-ear cress).